Here is a 229-residue protein sequence, read N- to C-terminus: Putative N-acetylmannosamine-6-phosphate 2-epimerase (229 aa).

Belongs to the NanE family.

The catalysed reaction is an N-acyl-D-glucosamine 6-phosphate = an N-acyl-D-mannosamine 6-phosphate. The protein operates within amino-sugar metabolism; N-acetylneuraminate degradation; D-fructose 6-phosphate from N-acetylneuraminate: step 3/5. Functionally, converts N-acetylmannosamine-6-phosphate (ManNAc-6-P) to N-acetylglucosamine-6-phosphate (GlcNAc-6-P). This chain is Putative N-acetylmannosamine-6-phosphate 2-epimerase, found in Escherichia coli O127:H6 (strain E2348/69 / EPEC).